We begin with the raw amino-acid sequence, 152 residues long: Superoxide dismutase [Cu-Zn] (152 aa).

Serine 2 carries the N-acetylserine modification. Residues histidine 44, histidine 46, and histidine 61 each contribute to the Cu cation site. Cysteine 55 and cysteine 144 form a disulfide bridge. The Zn(2+) site is built by histidine 61, histidine 69, histidine 78, and aspartate 81. Cu cation is bound at residue histidine 118.

It belongs to the Cu-Zn superoxide dismutase family. In terms of assembly, monomer. The cofactor is Cu cation. Zn(2+) serves as cofactor.

It is found in the cytoplasm. The catalysed reaction is 2 superoxide + 2 H(+) = H2O2 + O2. Inhibited by KCN and diethyldithiocarbamate. Its function is as follows. Destroys radicals which are normally produced within the cells and which are toxic to biological systems. The plasma superoxide dismutase has phagocytosis-stimulating activity and may play an important role in the biological defenses of the organism. The sequence is that of Superoxide dismutase [Cu-Zn] from Halocynthia roretzi (Sea squirt).